The sequence spans 428 residues: MEAKMNKIDTNVVELEIKVDAKDFNEALKKSYNKNSKKFNIPGFRKGKVPMNMVKKFYGVEVLFDDAINACIDKTYGVALEENNVRPVDYPQIEVVEVGEGKDLVYKAKVTTYPEVTLGDYKGLEVEEVSYEVKEEDIEKQLADMQARNARVETKEEGTVENGNIAVIDFKGFIDDVAFEGGEGKDYPLEIGSGSFIDNFEEQLVGLKVGESKDVNVTFPEAYGKEDLNGKPAKFEVTVKEIKVKELPALDDEFAKEVSEFDTLEELKADLKEKAVKANELRAKREMEEKVINAVVDNAKVEIPEAMINREVENMVRDLEMRLGQQGLSLEQYYEFTGSTEDKMKSYMKENAERKVKTDLVMSAVTEAEAIEATEEELKAKAEEVAKMYSNGAETEKMVDLLLNAQRAALELDVKREKTLKMLFESLK.

A PPIase FKBP-type domain is found at 163 to 248; that stretch reads GNIAVIDFKG…VKEIKVKELP (86 aa).

The protein belongs to the FKBP-type PPIase family. Tig subfamily.

It localises to the cytoplasm. The enzyme catalyses [protein]-peptidylproline (omega=180) = [protein]-peptidylproline (omega=0). Functionally, involved in protein export. Acts as a chaperone by maintaining the newly synthesized protein in an open conformation. Functions as a peptidyl-prolyl cis-trans isomerase. In Clostridium perfringens (strain ATCC 13124 / DSM 756 / JCM 1290 / NCIMB 6125 / NCTC 8237 / Type A), this protein is Trigger factor.